The sequence spans 364 residues: Probable protein disulfide-isomerase A6 (364 aa).

The first 28 residues, 1–28, serve as a signal peptide directing secretion; that stretch reads MKMEMHQIWSRIALASFAFAILFVSVSA. Thioredoxin domains are found at residues 29 to 137 and 139 to 256; these read DDVV…TEGG and NVKI…EKSG. Active-site nucleophile residues include Cys-58, Cys-61, Cys-177, and Cys-180. 2 cysteine pairs are disulfide-bonded: Cys-58-Cys-61 and Cys-177-Cys-180.

The protein belongs to the protein disulfide isomerase family.

The protein localises to the endoplasmic reticulum lumen. It carries out the reaction Catalyzes the rearrangement of -S-S- bonds in proteins.. The sequence is that of Probable protein disulfide-isomerase A6 from Medicago sativa (Alfalfa).